Consider the following 243-residue polypeptide: Methylthioribulose-1-phosphate dehydratase (243 aa).

Cys90 lines the substrate pocket. Residues His108 and His110 each contribute to the Zn(2+) site. Glu131 acts as the Proton donor/acceptor in catalysis. His193 is a binding site for Zn(2+).

Belongs to the aldolase class II family. MtnB subfamily. Zn(2+) serves as cofactor.

Its subcellular location is the cytoplasm. It catalyses the reaction 5-(methylsulfanyl)-D-ribulose 1-phosphate = 5-methylsulfanyl-2,3-dioxopentyl phosphate + H2O. It participates in amino-acid biosynthesis; L-methionine biosynthesis via salvage pathway; L-methionine from S-methyl-5-thio-alpha-D-ribose 1-phosphate: step 2/6. Functionally, catalyzes the dehydration of methylthioribulose-1-phosphate (MTRu-1-P) into 2,3-diketo-5-methylthiopentyl-1-phosphate (DK-MTP-1-P). This chain is Methylthioribulose-1-phosphate dehydratase, found in Zygosaccharomyces rouxii (strain ATCC 2623 / CBS 732 / NBRC 1130 / NCYC 568 / NRRL Y-229).